The following is a 177-amino-acid chain: Endoribonuclease YbeY (177 aa).

Zn(2+) is bound by residues His-118, His-122, and His-128.

Belongs to the endoribonuclease YbeY family. The cofactor is Zn(2+).

The protein resides in the cytoplasm. Functionally, single strand-specific metallo-endoribonuclease involved in late-stage 70S ribosome quality control and in maturation of the 3' terminus of the 16S rRNA. This chain is Endoribonuclease YbeY, found in Mycobacterium bovis (strain ATCC BAA-935 / AF2122/97).